The following is a 126-amino-acid chain: Protein ApaG (126 aa).

The ApaG domain maps to 2-126 (SDPRYQIDVS…FRLAVPGALH (125 aa)).

The protein is Protein ApaG of Ectopseudomonas mendocina (strain ymp) (Pseudomonas mendocina).